Reading from the N-terminus, the 504-residue chain is Ectoine/proline transporter ProP (504 aa).

A run of 11 helical transmembrane segments spans residues 41–61, 71–91, 118–138, 169–189, 207–227, 272–292, 309–329, 337–357, 362–382, 399–419, and 430–450; these read FMEWYDFGIYGYLTVTMTAVF, LLAVMFGFAVSYLVRPLGGLV, LIGLLPTAASIGAWALVLLYL, FFGAFLDMGSYLGFAAGASVV, DFGWRIPFLTAIPLGIIAVYL, LLIGIAIVAATNTAGYALTSY, AAVTVPILVVMSLLLPFVGMW, PVYATAVAATLILMVPAFLIM, IGAVLIALSMVAIPTGLYVAL, GMGISYNISVSLFGGTTPLIT, and IVPALYIMFFSAIAGVALLFM. Residues 477–504 are disordered; sequence NQDEDPNIDLSHMPFPDEENVGAEKQNA.

The protein belongs to the major facilitator superfamily.

Its subcellular location is the cell membrane. Uptake is activated by osmotic stress. Inhibited by CCCP. Functionally, involved in the uptake of osmoprotectants. Can transport ectoine and proline. Protons are probably the coupling ions. This Corynebacterium glutamicum (strain ATCC 13032 / DSM 20300 / JCM 1318 / BCRC 11384 / CCUG 27702 / LMG 3730 / NBRC 12168 / NCIMB 10025 / NRRL B-2784 / 534) protein is Ectoine/proline transporter ProP.